Consider the following 181-residue polypeptide: uncharacterized protein (181 aa).

Residues 133-153 (MCVCVHVCACVYVCMCVLVCM) traverse the membrane as a helical segment.

Its subcellular location is the membrane. This is an uncharacterized protein from Homo sapiens (Human).